A 375-amino-acid chain; its full sequence is Alcohol dehydrogenase 6 (375 aa).

Residues cysteine 47, histidine 69, cysteine 99, cysteine 102, cysteine 105, cysteine 113, and cysteine 175 each contribute to the Zn(2+) site. NAD(+) contacts are provided by residues 200–205 (GLGGVG), aspartate 224, lysine 229, 293–295 (VGS), and arginine 370.

This sequence belongs to the zinc-containing alcohol dehydrogenase family. Class-V subfamily. In terms of assembly, dimer. The cofactor is Zn(2+). As to expression, liver.

It localises to the cytoplasm. The catalysed reaction is a primary alcohol + NAD(+) = an aldehyde + NADH + H(+). It carries out the reaction a secondary alcohol + NAD(+) = a ketone + NADH + H(+). Functionally, alcohol dehydrogenase. Catalyzes the NAD-dependent oxidation of primary alcohols to the corresponding aldehydes. Oxidizes secondary alcohols to the corresponding ketones. This Peromyscus maniculatus (North American deer mouse) protein is Alcohol dehydrogenase 6 (ADH6).